A 425-amino-acid polypeptide reads, in one-letter code: Serine hydroxymethyltransferase (425 aa).

Residues Leu123 and 127–129 each bind (6S)-5,6,7,8-tetrahydrofolate; that span reads GHL. At Lys232 the chain carries N6-(pyridoxal phosphate)lysine. Glu248 provides a ligand contact to (6S)-5,6,7,8-tetrahydrofolate.

This sequence belongs to the SHMT family. In terms of assembly, homodimer. It depends on pyridoxal 5'-phosphate as a cofactor.

The protein localises to the cytoplasm. The catalysed reaction is (6R)-5,10-methylene-5,6,7,8-tetrahydrofolate + glycine + H2O = (6S)-5,6,7,8-tetrahydrofolate + L-serine. The protein operates within one-carbon metabolism; tetrahydrofolate interconversion. It functions in the pathway amino-acid biosynthesis; glycine biosynthesis; glycine from L-serine: step 1/1. Functionally, catalyzes the reversible interconversion of serine and glycine with tetrahydrofolate (THF) serving as the one-carbon carrier. This reaction serves as the major source of one-carbon groups required for the biosynthesis of purines, thymidylate, methionine, and other important biomolecules. Also exhibits THF-independent aldolase activity toward beta-hydroxyamino acids, producing glycine and aldehydes, via a retro-aldol mechanism. The chain is Serine hydroxymethyltransferase from Anaplasma phagocytophilum (strain HZ).